Reading from the N-terminus, the 475-residue chain is V-type ATP synthase beta chain (475 aa).

This sequence belongs to the ATPase alpha/beta chains family.

Functionally, produces ATP from ADP in the presence of a proton gradient across the membrane. The V-type beta chain is a regulatory subunit. This is V-type ATP synthase beta chain from Anaeromyxobacter dehalogenans (strain 2CP-C).